The primary structure comprises 378 residues: Coiled-coil domain-containing protein 74A (378 aa).

3 disordered regions span residues 1 to 52 (MSGA…RNLD), 128 to 211 (GGPS…EEPL), and 301 to 328 (EGSQ…PKVS). The segment covering 34-44 (LRPQSPQLRQS) has biased composition (polar residues). A coiled-coil region spans residues 47-90 (QKRNLDLEKSLQFLQQQHSEMLAKLHEEIEHLKRENKDLHYKLI). A compositionally biased stretch (basic residues) spans 141–151 (RTHRPGGKRGR). The segment covering 165-182 (DSLSMSSFQSVKSISNSG) has biased composition (polar residues). Basic and acidic residues-rich tracts occupy residues 194–205 (QDSKADVSQKAD) and 314–323 (SFPRDQEATH).

The sequence is that of Coiled-coil domain-containing protein 74A (CCDC74A) from Homo sapiens (Human).